The following is a 145-amino-acid chain: uncharacterized protein (145 aa).

The 145-residue stretch at 1-145 (LQYRAADTNA…NGQIVWGTAP (145 aa)) folds into the CBM3 domain.

This is an uncharacterized protein from Paenibacillus lautus (Bacillus lautus).